The sequence spans 397 residues: MFVPRGFSYAGVHCRIKRKRKDLGIIFSEVPCTAAGVFTTNVVKAAPVIYDMEILGKNPSGIRAITVNSGVANACTGEQGMINARRMAEKTAKELNIPVESVLVSSTGVIGVQLPMEKVESGIEEAVKNLSKDPVPFAEAIMTTDTKIKIHSKKVTIEGKEITVLGIAKGSGMIHPNMATMLSFITTDANVSEDALKKLLKISVDDSYNMIDVDGDTSTNDMVIILANGLAGNAPIQEETDGFWKLYEAVHEVNQVLAEKIVEDGEGATKVIEVEVRNAPDRNSARLIARAIVSSNLVKTAIYGEDANWGRVIAAAGYSGAQFDPDRLDLFFESAAGRIKVAENGQGVDFDEDTAKKILSEKKVKIILDMKQGKELARAWGCDLTEKYVEINGRYRT.

Substrate is bound by residues Thr-143, Lys-169, Thr-180, Glu-266, Asn-392, and Thr-397. Residue Thr-180 is the Nucleophile of the active site.

The protein belongs to the ArgJ family. In terms of assembly, heterotetramer of two alpha and two beta chains.

It is found in the cytoplasm. The catalysed reaction is N(2)-acetyl-L-ornithine + L-glutamate = N-acetyl-L-glutamate + L-ornithine. It catalyses the reaction L-glutamate + acetyl-CoA = N-acetyl-L-glutamate + CoA + H(+). The protein operates within amino-acid biosynthesis; L-arginine biosynthesis; L-ornithine and N-acetyl-L-glutamate from L-glutamate and N(2)-acetyl-L-ornithine (cyclic): step 1/1. Its pathway is amino-acid biosynthesis; L-arginine biosynthesis; N(2)-acetyl-L-ornithine from L-glutamate: step 1/4. With respect to regulation, competitively inhibited by L-ornithine. Its function is as follows. Catalyzes two activities which are involved in the cyclic version of arginine biosynthesis: the synthesis of N-acetylglutamate from glutamate and acetyl-CoA as the acetyl donor, and of ornithine by transacetylation between N(2)-acetylornithine and glutamate. This Thermotoga neapolitana (strain ATCC 49049 / DSM 4359 / NBRC 107923 / NS-E) protein is Arginine biosynthesis bifunctional protein ArgJ.